The following is a 182-amino-acid chain: A-type ATP synthase subunit E (182 aa).

It belongs to the V-ATPase E subunit family. In terms of assembly, has multiple subunits with at least A(3), B(3), C, D, E, F, H, I and proteolipid K(x).

It localises to the cell membrane. Component of the A-type ATP synthase that produces ATP from ADP in the presence of a proton gradient across the membrane. The sequence is that of A-type ATP synthase subunit E from Methanothrix thermoacetophila (strain DSM 6194 / JCM 14653 / NBRC 101360 / PT) (Methanosaeta thermophila).